Here is an 836-residue protein sequence, read N- to C-terminus: Neuroligin-2 (836 aa).

The N-terminal stretch at 1 to 14 (MWLLALCLVGLAGA) is a signal peptide. Residues 15 to 678 (QRGGGGPGGG…DSRDYSTELS (664 aa)) are Extracellular-facing. Residues N98 and N136 are each glycosylated (N-linked (GlcNAc...) asparagine). Intrachain disulfides connect C106/C141, C317/C328, and C487/C521. The N-linked (GlcNAc...) asparagine glycan is linked to N522. A disordered region spans residues 623–661 (PPYATRWPPRTPGPGTSGTRRPPPPATLPPESDIDLGPR). A helical transmembrane segment spans residues 679-699 (VTVAVGASLLFLNILAFAALY). Residues 679-699 (VTVAVGASLLFLNILAFAALY) form a required for interaction with LHFPL4 region. Residues 700–836 (YKRDRRQELR…LPHPHSTTRV (137 aa)) lie on the Cytoplasmic side of the membrane. Disordered regions lie at residues 711–735 (RRLSPPGGSGSGVPGGGPLLPTAGR) and 791–836 (LLPS…TTRV). Phosphoserine occurs at positions 714 and 719. Residues 717–728 (GGSGSGVPGGGP) show a composition bias toward gly residues. Over residues 796 to 819 (LGPPPPPPPPSLHPFGPFPPPPPT) the composition is skewed to pro residues. Polar residues predominate over residues 824 to 836 (NNTLPHPHSTTRV).

This sequence belongs to the type-B carboxylesterase/lipase family. In terms of assembly, interacts with neurexins NRXN1, NRXN2 and NRXN3. Interaction with neurexins is mediated by heparan sulfate glycan modification on neurexin. Interacts (via its C-terminus) with DLG4/PSD-95 (via PDZ domain 3). Interacts with PATJ. Interacts with GPHN. Interacts with MDGA1 and MDGA2. Found in a complex with MAGI2 and IGSF9B, where it interacts with MAGI2 (via WW 1, WW 2 and PDZ 2 domains). Identified in a complex of 720 kDa composed of LHFPL4, NLGN2, GABRA1, GABRB2, GABRG2 and GABRB3. Interacts with LHFPL4; leading to mutual regulation of the protein level and synaptic clustering. Interacts with GABRA1. Detected on hippocampus neurons, especially at inhibitory synapses. Detected in retina, in the outer and inner plexiform layer. Detected in pancreas, in islet of Langerhans beta cells (at protein level). Expressed in brain, spinal cord and dorsal root ganglion. Detected in brain, and at lower levels in pancreas islet beta cells.

The protein localises to the cell membrane. Its subcellular location is the postsynaptic cell membrane. The protein resides in the presynaptic cell membrane. Functionally, transmembrane scaffolding protein involved in cell-cell interactions via its interactions with neurexin family members. Mediates cell-cell interactions both in neurons and in other types of cells, such as Langerhans beta cells. Plays a role in synapse function and synaptic signal transmission, especially via gamma-aminobutyric acid receptors (GABA(A) receptors). Functions by recruiting and clustering synaptic proteins. Promotes clustering of postsynaptic GABRG2 and GPHN. Promotes clustering of postsynaptic LHFPL4. Modulates signaling by inhibitory synapses, and thereby plays a role in controlling the ratio of signaling by excitatory and inhibitory synapses and information processing. Required for normal signal amplitude from inhibitory synapses, but is not essential for normal signal frequency. May promote the initial formation of synapses, but is not essential for this. In vitro, triggers the de novo formation of presynaptic structures. Mediates cell-cell interactions between Langerhans beta cells and modulates insulin secretion. This is Neuroligin-2 (Nlgn2) from Rattus norvegicus (Rat).